The primary structure comprises 257 residues: Ribonuclease HII (257 aa).

The RNase H type-2 domain maps to 72 to 257 (TYIAGIDEVG…FAPIKDMIQK (186 aa)). A divalent metal cation is bound by residues aspartate 78, glutamate 79, and aspartate 170.

This sequence belongs to the RNase HII family. Mn(2+) is required as a cofactor. Requires Mg(2+) as cofactor.

It is found in the cytoplasm. The catalysed reaction is Endonucleolytic cleavage to 5'-phosphomonoester.. Its function is as follows. Endonuclease that specifically degrades the RNA of RNA-DNA hybrids. This is Ribonuclease HII from Bacillus cereus (strain B4264).